The primary structure comprises 339 residues: Ketol-acid reductoisomerase (NADP(+)) (339 aa).

The KARI N-terminal Rossmann domain maps to 1–182 (MRVYYDRDAD…GGGRSGIIET (182 aa)). NADP(+) contacts are provided by residues 24 to 27 (YGSQ), K48, S51, T53, and 83 to 86 (DELQ). H108 is an active-site residue. G134 contacts NADP(+). Residues 183-328 (NFREECETDL…AKLRGMMPWI (146 aa)) form the KARI C-terminal knotted domain. 4 residues coordinate Mg(2+): D191, E195, E227, and E231. Residue S252 participates in substrate binding.

This sequence belongs to the ketol-acid reductoisomerase family. Mg(2+) serves as cofactor.

It carries out the reaction (2R)-2,3-dihydroxy-3-methylbutanoate + NADP(+) = (2S)-2-acetolactate + NADPH + H(+). It catalyses the reaction (2R,3R)-2,3-dihydroxy-3-methylpentanoate + NADP(+) = (S)-2-ethyl-2-hydroxy-3-oxobutanoate + NADPH + H(+). The protein operates within amino-acid biosynthesis; L-isoleucine biosynthesis; L-isoleucine from 2-oxobutanoate: step 2/4. It functions in the pathway amino-acid biosynthesis; L-valine biosynthesis; L-valine from pyruvate: step 2/4. Involved in the biosynthesis of branched-chain amino acids (BCAA). Catalyzes an alkyl-migration followed by a ketol-acid reduction of (S)-2-acetolactate (S2AL) to yield (R)-2,3-dihydroxy-isovalerate. In the isomerase reaction, S2AL is rearranged via a Mg-dependent methyl migration to produce 3-hydroxy-3-methyl-2-ketobutyrate (HMKB). In the reductase reaction, this 2-ketoacid undergoes a metal-dependent reduction by NADPH to yield (R)-2,3-dihydroxy-isovalerate. The chain is Ketol-acid reductoisomerase (NADP(+)) from Rhizobium etli (strain ATCC 51251 / DSM 11541 / JCM 21823 / NBRC 15573 / CFN 42).